The primary structure comprises 176 residues: Nucleoside triphosphate/diphosphate phosphatase (176 aa).

The active-site Proton donor is R23. Mg(2+) contacts are provided by N87, D103, D105, D107, D120, and E123.

This sequence belongs to the Ntdp family. Requires Mg(2+) as cofactor.

The enzyme catalyses a ribonucleoside 5'-triphosphate + H2O = a ribonucleoside 5'-diphosphate + phosphate + H(+). It catalyses the reaction a ribonucleoside 5'-diphosphate + H2O = a ribonucleoside 5'-phosphate + phosphate + H(+). Has nucleoside phosphatase activity towards nucleoside triphosphates and nucleoside diphosphates. The sequence is that of Nucleoside triphosphate/diphosphate phosphatase from Bacillus cereus (strain G9842).